A 238-amino-acid polypeptide reads, in one-letter code: NADH-quinone oxidoreductase subunit C (238 aa).

The span at 1-11 (MSTSNGSANGT) shows a compositional bias: polar residues. Positions 1 to 20 (MSTSNGSANGTNGVGLPRGD) are disordered.

Belongs to the complex I 30 kDa subunit family. NDH-1 is composed of 14 different subunits. Subunits NuoB, C, D, E, F, and G constitute the peripheral sector of the complex.

It localises to the cell membrane. It carries out the reaction a quinone + NADH + 5 H(+)(in) = a quinol + NAD(+) + 4 H(+)(out). Functionally, NDH-1 shuttles electrons from NADH, via FMN and iron-sulfur (Fe-S) centers, to quinones in the respiratory chain. The immediate electron acceptor for the enzyme in this species is believed to be a menaquinone. Couples the redox reaction to proton translocation (for every two electrons transferred, four hydrogen ions are translocated across the cytoplasmic membrane), and thus conserves the redox energy in a proton gradient. This chain is NADH-quinone oxidoreductase subunit C, found in Mycolicibacterium smegmatis (strain ATCC 700084 / mc(2)155) (Mycobacterium smegmatis).